The sequence spans 356 residues: Peptide chain release factor 1 (356 aa).

At Gln233 the chain carries N5-methylglutamine.

This sequence belongs to the prokaryotic/mitochondrial release factor family. In terms of processing, methylated by PrmC. Methylation increases the termination efficiency of RF1.

It localises to the cytoplasm. Its function is as follows. Peptide chain release factor 1 directs the termination of translation in response to the peptide chain termination codons UAG and UAA. In Oceanobacillus iheyensis (strain DSM 14371 / CIP 107618 / JCM 11309 / KCTC 3954 / HTE831), this protein is Peptide chain release factor 1.